Here is a 484-residue protein sequence, read N- to C-terminus: MSLARSTALLDEKNTLTSSVTDKYRLAGKITQTCLQHIIQTVLTQYETYTVGEMCRMGDEFLERATTAVYKSVAEKGIAQPVRIEKQEFVGGVSPENGDKFQGGMLAPGDLVKISLGVYIDGYTAQVTQTEVVRHVPNTSAGETEQPLTGSPADAVCASYLASEAVIAYLAQVTDPNPGKAVGVVTGTKIRELVEKIAAAYHVKIVPGSSVRRIRRFLAGQHDIVLERDYKGVLWEVEGEEERALHAVKLAESEAKQESTEGAVCLYEQHIEEEENFTVEAGEAYQVDIQMAAAPQKGAIRLYDFQGYDESGTVINQYGRDFSVTYGLKIQASRKLLSQLEATTSVYPFKLSHVESNVAKARLGLGEILAHQILVPIPVKVAKFVPLAALYEFSKNSKARARDEASKAVPVARNSSSVLLTNDACLRLTGGQAFPPPYVHSAFELPEDVTNLLKLVGHKHGAKVKDVLPGDVDMAPAKEAKMEE.

This sequence belongs to the peptidase M24 family. As to quaternary structure, component of the nucleoplasmic and cytoplasmic pre-60S ribosomal particles.

It localises to the cytoplasm. It is found in the nucleus. Probable metalloprotease involved in proper assembly of pre-ribosomal particles during the biogenesis of the 60S ribosomal subunit. Accompanies the pre-60S particles to the cytoplasm. The polypeptide is Probable metalloprotease ARX1 (ARX1) (Yarrowia lipolytica (strain CLIB 122 / E 150) (Yeast)).